The primary structure comprises 300 residues: UDP-3-O-acyl-N-acetylglucosamine deacetylase (300 aa).

The Zn(2+) site is built by His78, His237, and Asp241. His264 serves as the catalytic Proton donor.

It belongs to the LpxC family. Zn(2+) is required as a cofactor.

The enzyme catalyses a UDP-3-O-[(3R)-3-hydroxyacyl]-N-acetyl-alpha-D-glucosamine + H2O = a UDP-3-O-[(3R)-3-hydroxyacyl]-alpha-D-glucosamine + acetate. The protein operates within glycolipid biosynthesis; lipid IV(A) biosynthesis; lipid IV(A) from (3R)-3-hydroxytetradecanoyl-[acyl-carrier-protein] and UDP-N-acetyl-alpha-D-glucosamine: step 2/6. Its function is as follows. Catalyzes the hydrolysis of UDP-3-O-myristoyl-N-acetylglucosamine to form UDP-3-O-myristoylglucosamine and acetate, the committed step in lipid A biosynthesis. The protein is UDP-3-O-acyl-N-acetylglucosamine deacetylase of Acinetobacter baumannii (strain AB307-0294).